The chain runs to 145 residues: Bacilliredoxin SAOUHSC_01610 (145 aa).

Belongs to the bacilliredoxin family.

This is Bacilliredoxin SAOUHSC_01610 from Staphylococcus aureus (strain NCTC 8325 / PS 47).